Consider the following 149-residue polypeptide: Azurin (149 aa).

The signal sequence occupies residues 1 to 20 (MLAKATLAIVLSAASLPVLA). Positions 21-149 (AQCEATIESN…MMKGTLKLSN (129 aa)) constitute a Plastocyanin-like domain. Residues cysteine 23 and cysteine 46 are joined by a disulfide bond. Cu cation-binding residues include histidine 66, cysteine 132, histidine 137, and methionine 141.

The protein localises to the periplasm. In terms of biological role, transfers electrons from cytochrome c551 to cytochrome oxidase. The chain is Azurin (azu) from Achromobacter denitrificans (Alcaligenes denitrificans).